The chain runs to 314 residues: 4-hydroxy-3-methylbut-2-enyl diphosphate reductase (314 aa).

C12 is a binding site for [4Fe-4S] cluster. 2 residues coordinate (2E)-4-hydroxy-3-methylbut-2-enyl diphosphate: H41 and H74. H41 and H74 together coordinate dimethylallyl diphosphate. Isopentenyl diphosphate-binding residues include H41 and H74. C96 contacts [4Fe-4S] cluster. Residue H124 coordinates (2E)-4-hydroxy-3-methylbut-2-enyl diphosphate. H124 is a binding site for dimethylallyl diphosphate. An isopentenyl diphosphate-binding site is contributed by H124. The Proton donor role is filled by E126. A (2E)-4-hydroxy-3-methylbut-2-enyl diphosphate-binding site is contributed by T167. C197 contacts [4Fe-4S] cluster. S225, S226, N227, and S269 together coordinate (2E)-4-hydroxy-3-methylbut-2-enyl diphosphate. Dimethylallyl diphosphate contacts are provided by S225, S226, N227, and S269. Positions 225, 226, 227, and 269 each coordinate isopentenyl diphosphate.

It belongs to the IspH family. [4Fe-4S] cluster serves as cofactor.

The enzyme catalyses isopentenyl diphosphate + 2 oxidized [2Fe-2S]-[ferredoxin] + H2O = (2E)-4-hydroxy-3-methylbut-2-enyl diphosphate + 2 reduced [2Fe-2S]-[ferredoxin] + 2 H(+). It carries out the reaction dimethylallyl diphosphate + 2 oxidized [2Fe-2S]-[ferredoxin] + H2O = (2E)-4-hydroxy-3-methylbut-2-enyl diphosphate + 2 reduced [2Fe-2S]-[ferredoxin] + 2 H(+). It functions in the pathway isoprenoid biosynthesis; dimethylallyl diphosphate biosynthesis; dimethylallyl diphosphate from (2E)-4-hydroxy-3-methylbutenyl diphosphate: step 1/1. It participates in isoprenoid biosynthesis; isopentenyl diphosphate biosynthesis via DXP pathway; isopentenyl diphosphate from 1-deoxy-D-xylulose 5-phosphate: step 6/6. Functionally, catalyzes the conversion of 1-hydroxy-2-methyl-2-(E)-butenyl 4-diphosphate (HMBPP) into a mixture of isopentenyl diphosphate (IPP) and dimethylallyl diphosphate (DMAPP). Acts in the terminal step of the DOXP/MEP pathway for isoprenoid precursor biosynthesis. This chain is 4-hydroxy-3-methylbut-2-enyl diphosphate reductase, found in Actinobacillus pleuropneumoniae serotype 7 (strain AP76).